The following is a 296-amino-acid chain: Iron(3+)-hydroxamate-binding protein FhuD (296 aa).

A signal peptide (tat-type signal) is located at residues 1-30; the sequence is MSGLPLISRRRLLTAMALSPLLWQMNTAHA. In terms of domain architecture, Fe/B12 periplasmic-binding spans 37 to 296; it reads RIVALEWLPV…VLDNAIGGKA (260 aa). Fe(III)-coprogen is bound by residues Trp68, Arg84, Ser103, Tyr106, Phe124, Trp217, Trp273, Phe274, and Tyr275.

It belongs to the bacterial solute-binding protein 8 family. In terms of assembly, the complex is composed of two ATP-binding proteins (FhuC), a transmembrane protein (FhuB) and a solute-binding protein (FhuD). FhuD interacts with FhuB. Substrate-loaded FhuD binds FhuB more strongly than FhuD alone. In terms of processing, exported by the Tat system. The position of the signal peptide cleavage has been experimentally proven. Can also be exported by the Sec system.

Its subcellular location is the periplasm. Part of the ABC transporter complex FhuCDB involved in iron(3+)-hydroxamate import. Binds the iron(3+)-hydroxamate complex and transfers it to the membrane-bound permease. Required for the transport of all iron(3+)-hydroxamate siderophores such as ferrichrome, gallichrome, desferrioxamine, coprogen, aerobactin, shizokinen, rhodotorulic acid and the antibiotic albomycin. The polypeptide is Iron(3+)-hydroxamate-binding protein FhuD (fhuD) (Escherichia coli (strain K12)).